We begin with the raw amino-acid sequence, 343 residues long: Anthranilate phosphoribosyltransferase (343 aa).

5-phospho-alpha-D-ribose 1-diphosphate contacts are provided by residues G81, 84-85 (GD), 91-94 (NVST), 109-117 (KHGNRSVSS), and S121. G81 contacts anthranilate. Mg(2+) is bound at residue S93. Residue N112 participates in anthranilate binding. R167 serves as a coordination point for anthranilate. D226 and E227 together coordinate Mg(2+).

Belongs to the anthranilate phosphoribosyltransferase family. As to quaternary structure, homodimer. It depends on Mg(2+) as a cofactor.

The enzyme catalyses N-(5-phospho-beta-D-ribosyl)anthranilate + diphosphate = 5-phospho-alpha-D-ribose 1-diphosphate + anthranilate. Its pathway is amino-acid biosynthesis; L-tryptophan biosynthesis; L-tryptophan from chorismate: step 2/5. Catalyzes the transfer of the phosphoribosyl group of 5-phosphorylribose-1-pyrophosphate (PRPP) to anthranilate to yield N-(5'-phosphoribosyl)-anthranilate (PRA). The polypeptide is Anthranilate phosphoribosyltransferase (Chromohalobacter salexigens (strain ATCC BAA-138 / DSM 3043 / CIP 106854 / NCIMB 13768 / 1H11)).